A 309-amino-acid polypeptide reads, in one-letter code: Probable manganese-dependent inorganic pyrophosphatase (309 aa).

Residues H9, D13, D15, D75, H97, and D149 each contribute to the Mn(2+) site.

Belongs to the PPase class C family. It depends on Mn(2+) as a cofactor.

Its subcellular location is the cytoplasm. The catalysed reaction is diphosphate + H2O = 2 phosphate + H(+). This is Probable manganese-dependent inorganic pyrophosphatase from Staphylococcus aureus (strain COL).